The following is a 1353-amino-acid chain: Protein prickle (1353 aa).

Disordered stretches follow at residues 130–206, 266–292, and 500–540; these read VDDG…TKRN, QEEEPPEPPKPALPPKQKQPRPVPPLP, and AKYS…SAHA. The segment covering 147-165 has biased composition (low complexity); that stretch reads TPTATATAGRPLFPLSSSP. Positions 166-178 are enriched in basic residues; that stretch reads RRSKKLLRSLRAH. Positions 179 to 189 are enriched in basic and acidic residues; that stretch reads VKGESRPEKPA. Low complexity predominate over residues 514–532; that stretch reads LSPALSTPSPPSLLHHPAA. A PET domain is found at 548–656; it reads MDMQRQSHSD…NVRQLMSARP (109 aa). LIM zinc-binding domains lie at 655–719, 720–780, and 781–843; these read RPCD…ETLK, PRCS…MFAE, and YCDY…GEPP. 3 disordered regions span residues 840-892, 933-962, and 1062-1303; these read GEPP…HQAS, HCRSGDHAGGGDFTDFSGGRASSTSHNMSP, and ADIM…SSSS. The span at 861-892 shows a compositional bias: low complexity; it reads TQRVRPQTRITSSHASSSPPMSPQQQQQHQAS. 2 stretches are compositionally biased toward polar residues: residues 952-962 and 1111-1120; these read RASSTSHNMSP and SLNTPLSAHS. The span at 1130–1142 shows a compositional bias: low complexity; sequence SILSGASSSSPMS. The span at 1177–1205 shows a compositional bias: basic and acidic residues; that stretch reads GDKDRDRDRERDRDRDRDKGGDKDRESGR. Basic residues-rich tracts occupy residues 1207–1220 and 1228–1240; these read GPGHSSRRRRRRKS and NHHRSGSGHRSHS. A compositionally biased stretch (basic and acidic residues) spans 1269 to 1284; it reads ETAHKSPRQQRERERE.

This sequence belongs to the prickle / espinas / testin family. As to quaternary structure, interacts with dsh; PET and LIM domains interact with dsh DEP domain, in wing cells. Interacts with Vang in photoreceptor cells.

It is found in the cell membrane. In terms of biological role, acts in a planar cell polarity (PCP) complex; polarization along the apical/basal axis of epithelial cells. PCP signaling in the wing disk requires the receptor fz and the cytoplasmic proteins dsh and pk. These act in a feedback loop leading to activation of the jnk cascade and subsequent polarized arrangement of hairs and bristles. Dgo and pk compete with one another for dsh binding, thereby modulating fz dsh activity and ensuring tight control over fz PCP signaling. Vang, stan and pk function together to regulate the establishment of tissue polarity in the adult eye. The sequence is that of Protein prickle from Drosophila pseudoobscura pseudoobscura (Fruit fly).